We begin with the raw amino-acid sequence, 81 residues long: Large ribosomal subunit protein bL31B (81 aa).

This sequence belongs to the bacterial ribosomal protein bL31 family. Type B subfamily. In terms of assembly, part of the 50S ribosomal subunit.

The chain is Large ribosomal subunit protein bL31B from Borrelia garinii subsp. bavariensis (strain ATCC BAA-2496 / DSM 23469 / PBi) (Borreliella bavariensis).